The primary structure comprises 514 residues: Histidine ammonia-lyase (514 aa).

A cross-link (5-imidazolinone (Ala-Gly)) is located at residues 144–146; that stretch reads ASG. Serine 145 carries the 2,3-didehydroalanine (Ser) modification.

This sequence belongs to the PAL/histidase family. Post-translationally, contains an active site 4-methylidene-imidazol-5-one (MIO), which is formed autocatalytically by cyclization and dehydration of residues Ala-Ser-Gly.

It is found in the cytoplasm. The catalysed reaction is L-histidine = trans-urocanate + NH4(+). Its pathway is amino-acid degradation; L-histidine degradation into L-glutamate; N-formimidoyl-L-glutamate from L-histidine: step 1/3. This Rhodospirillum rubrum (strain ATCC 11170 / ATH 1.1.1 / DSM 467 / LMG 4362 / NCIMB 8255 / S1) protein is Histidine ammonia-lyase.